The chain runs to 336 residues: Phenylalanine--tRNA ligase alpha subunit (336 aa).

Glutamate 257 is a Mg(2+) binding site.

Belongs to the class-II aminoacyl-tRNA synthetase family. Phe-tRNA synthetase alpha subunit type 1 subfamily. In terms of assembly, tetramer of two alpha and two beta subunits. Requires Mg(2+) as cofactor.

Its subcellular location is the cytoplasm. The enzyme catalyses tRNA(Phe) + L-phenylalanine + ATP = L-phenylalanyl-tRNA(Phe) + AMP + diphosphate + H(+). The polypeptide is Phenylalanine--tRNA ligase alpha subunit (Xanthomonas campestris pv. campestris (strain 8004)).